The chain runs to 152 residues: Histone H2B.9 (152 aa).

Basic and acidic residues-rich tracts occupy residues methionine 1 to glutamate 16 and glutamate 34 to lysine 52. The tract at residues methionine 1 to lysine 59 is disordered. Residues lysine 7 and lysine 35 each carry the N6-acetyllysine modification. Residue lysine 148 forms a Glycyl lysine isopeptide (Lys-Gly) (interchain with G-Cter in ubiquitin) linkage.

This sequence belongs to the histone H2B family. The nucleosome is a histone octamer containing two molecules each of H2A, H2B, H3 and H4 assembled in one H3-H4 heterotetramer and two H2A-H2B heterodimers. The octamer wraps approximately 147 bp of DNA. Post-translationally, can be acetylated to form H2BK6ac and H2BK33ac. In terms of processing, monoubiquitinated by BRE1 to form H2BK143ub1 and deubiquitinated by UBP26. Required for heterochromatic histone H3 di- and trimethylation at H3K4me. May give a specific tag for epigenetic transcriptional activation.

Its subcellular location is the nucleus. It localises to the chromosome. Functionally, core component of nucleosome. Nucleosomes wrap and compact DNA into chromatin, limiting DNA accessibility to the cellular machineries which require DNA as a template. Histones thereby play a central role in transcription regulation, DNA repair, DNA replication and chromosomal stability. DNA accessibility is regulated via a complex set of post-translational modifications of histones, also called histone code, and nucleosome remodeling. The protein is Histone H2B.9 (H2B.9) of Oryza sativa subsp. indica (Rice).